Consider the following 494-residue polypeptide: Nicotianamine aminotransferase 1 (494 aa).

Composition is skewed to low complexity over residues 24 to 38 (SGTS…TSSS) and 48 to 62 (STAM…AASS). Residues 24–76 (SGTSYPTRTTTTSSSAPEFTNKKQSTAMAPTTAAAAASSNGGGESDGSSKEWR) are disordered. An N6-(pyridoxal phosphate)lysine modification is found at lysine 322.

This sequence belongs to the class-I pyridoxal-phosphate-dependent aminotransferase family. It depends on pyridoxal 5'-phosphate as a cofactor. As to expression, expressed in companion and pericycle cells adjacent to the protoxylem of roots. Expressed in companion cells of shoots.

It catalyses the reaction nicotianamine + 2-oxoglutarate = 3''-deamino-3''-oxonicotianamine + L-glutamate. Functionally, involved in biosynthesis of mugineic acid family phytosiderophores, which are ferric iron chelators produced in graminaceous plants in response to iron deficiency. The chain is Nicotianamine aminotransferase 1 from Oryza sativa subsp. japonica (Rice).